We begin with the raw amino-acid sequence, 98 residues long: NADH-ubiquinone oxidoreductase chain 4L (98 aa).

A run of 3 helical transmembrane segments spans residues 1-21 (MTPI…GLAF), 26-46 (LLSA…ALSL), and 59-79 (APML…ALMV).

Belongs to the complex I subunit 4L family.

The protein resides in the mitochondrion membrane. It catalyses the reaction a ubiquinone + NADH + 5 H(+)(in) = a ubiquinol + NAD(+) + 4 H(+)(out). In terms of biological role, core subunit of the mitochondrial membrane respiratory chain NADH dehydrogenase (Complex I) which catalyzes electron transfer from NADH through the respiratory chain, using ubiquinone as an electron acceptor. Part of the enzyme membrane arm which is embedded in the lipid bilayer and involved in proton translocation. This is NADH-ubiquinone oxidoreductase chain 4L (MT-ND4L) from Tetraodon nigroviridis (Spotted green pufferfish).